We begin with the raw amino-acid sequence, 194 residues long: Imidazoleglycerol-phosphate dehydratase (194 aa).

It belongs to the imidazoleglycerol-phosphate dehydratase family.

Its subcellular location is the cytoplasm. It carries out the reaction D-erythro-1-(imidazol-4-yl)glycerol 3-phosphate = 3-(imidazol-4-yl)-2-oxopropyl phosphate + H2O. The protein operates within amino-acid biosynthesis; L-histidine biosynthesis; L-histidine from 5-phospho-alpha-D-ribose 1-diphosphate: step 6/9. In Bacillus cereus (strain AH187), this protein is Imidazoleglycerol-phosphate dehydratase.